Here is a 446-residue protein sequence, read N- to C-terminus: ATP synthase subunit b-delta (446 aa).

Positions 1–168 (MSTFIGQLFG…PATADVDYPL (168 aa)) are ATP synthase subunit b. The helical transmembrane segment at 4-24 (FIGQLFGFAVIVYLVWRFIVP) threads the bilayer. Residues 169–446 (LAKMRSASRR…LAAAEARLPD (278 aa)) form an ATP synthase subunit delta region.

It in the N-terminal section; belongs to the ATPase B chain family. In the C-terminal section; belongs to the ATPase delta chain family. As to quaternary structure, F-type ATPases have 2 components, F(1) - the catalytic core - and F(0) - the membrane proton channel. F(1) has five subunits: alpha(3), beta(3), gamma(1), delta(1), epsilon(1). F(0) has three main subunits: a(1), b(2) and c(10-14). The alpha and beta chains form an alternating ring which encloses part of the gamma chain. F(1) is attached to F(0) by a central stalk formed by the gamma and epsilon chains, while a peripheral stalk is formed by the delta and b chains.

The protein resides in the cell membrane. F(1)F(0) ATP synthase produces ATP from ADP in the presence of a proton or sodium gradient. F-type ATPases consist of two structural domains, F(1) containing the extramembraneous catalytic core and F(0) containing the membrane proton channel, linked together by a central stalk and a peripheral stalk. During catalysis, ATP synthesis in the catalytic domain of F(1) is coupled via a rotary mechanism of the central stalk subunits to proton translocation. Functionally, this fusion protein includes a component of the F(0) channel (subunit b) and of the F(1) subunit (subunit delta). Two copies of subunit b and one of delta together form the peripheral 'stator' stalk which links F(1) to F(0). The protein is ATP synthase subunit b-delta (atpFH) of Mycobacterium bovis (strain ATCC BAA-935 / AF2122/97).